The chain runs to 1092 residues: DNA polymerase delta catalytic subunit (1092 aa).

Residues 1–71 (MDGKRKFNGT…SRPPPPELDP (71 aa)) form a disordered region. The Nuclear localization signal signature appears at 4-19 (KRKFNGTSNGHAKKPR). Residues Cys997, Cys1000, Cys1014, and Cys1017 each coordinate Zn(2+). The CysA-type zinc finger occupies 997–1017 (CLGCKSLMPKGYEQACLCPHC). [4Fe-4S] cluster contacts are provided by Cys1046, Cys1049, Cys1059, and Cys1064. The CysB motif signature appears at 1046 to 1064 (CQRCQESLHEEVICSNRDC).

The protein belongs to the DNA polymerase type-B family. In terms of assembly, catalytic component of the DNA polymerase delta complex consisting of three subunits: the catalytic subunit PolD1 and two accessory subunits PolD2/Pol31 and PolD3/Pol32. Within the delta complex, interacts with both PolD2 and PolD3, and is able to interact with PolD2 in the absence of PolD3. Interacts with PCNA and PCNA2. It depends on [4Fe-4S] cluster as a cofactor. The cofactor is Mg(2+). In terms of tissue distribution, expressed in ovaries (at the protein level). Expressed in embryos (at the protein level).

The protein localises to the nucleus. Its subcellular location is the nucleoplasm. The enzyme catalyses DNA(n) + a 2'-deoxyribonucleoside 5'-triphosphate = DNA(n+1) + diphosphate. Inhibited by KCL. Also inhibited by carbonyldiphosphonate, aphidicolin and N-ethylmaleimide (NEM). Its function is as follows. As the catalytic component of the DNA polymerase delta complex, plays a crucial role in high fidelity genome replication, including lagging strand synthesis, DNA recombination and repair. Exhibits both DNA polymerase and 3'- to 5'-exonuclease activities. Required at the nucleus of rapidly dividing embryonic cells to activate genome replication during the earliest cell cycles. Likely to require the presence of accessory proteins PolD2 and PolD3 for full activity. The protein is DNA polymerase delta catalytic subunit of Drosophila melanogaster (Fruit fly).